The chain runs to 381 residues: Alkanesulfonate monooxygenase (381 aa).

It belongs to the SsuD family. In terms of assembly, homotetramer.

The catalysed reaction is an alkanesulfonate + FMNH2 + O2 = an aldehyde + FMN + sulfite + H2O + 2 H(+). Its function is as follows. Catalyzes the desulfonation of aliphatic sulfonates. The protein is Alkanesulfonate monooxygenase of Citrobacter koseri (strain ATCC BAA-895 / CDC 4225-83 / SGSC4696).